The sequence spans 170 residues: Putative 5'(3')-deoxyribonucleotidase (170 aa).

D28 functions as the Nucleophile in the catalytic mechanism. The Mg(2+) site is built by D28, D30, and D134. The active-site Proton donor is the D30.

The protein belongs to the 5'(3')-deoxyribonucleotidase family. Mg(2+) serves as cofactor.

Functionally, dephosphorylates the 5' and 2'(3')-phosphates of deoxyribonucleotides. This Vibrio parahaemolyticus (KVP40) protein is Putative 5'(3')-deoxyribonucleotidase.